The following is a 314-amino-acid chain: MYDKQDKQAVAIIGSGNIGTDLMIKVLRDAKHLEMGAMVGIDPASDGLARAKRLGVATTAHGIEGLVTMPNFGAIRIAFDATSAGAHHRHAAVLREHGVTVIDLTPAAIGPFVVPVVNLFAHLDAPNLNMVTCGGQATIPIVHAVSRVAPVRYAEIVASIASRSAGPGTRANIDEFTETTSKAIETVGGAARGKAIIVLNPAEPPLMMRDTVYCLTEEEADTDEIESSIRAMVSAVASYVPGYRLKQAVQFDRYTAANPLALHANERRAGLKVSVFLEVEGAAHYLPSYAGNLDIMTSAALAAAEQIAASRVAA.

Residue 15–18 (SGNI) coordinates NAD(+). Cys-133 (acyl-thioester intermediate) is an active-site residue. NAD(+) is bound by residues 164-172 (SAGPGTRAN) and Asn-292.

It belongs to the acetaldehyde dehydrogenase family.

The enzyme catalyses acetaldehyde + NAD(+) + CoA = acetyl-CoA + NADH + H(+). The chain is Acetaldehyde dehydrogenase from Paraburkholderia phytofirmans (strain DSM 17436 / LMG 22146 / PsJN) (Burkholderia phytofirmans).